Consider the following 369-residue polypeptide: Fructose-bisphosphate aldolase (369 aa).

D40 serves as a coordination point for dihydroxyacetone phosphate. Residues S42 and T45 each contribute to the D-glyceraldehyde 3-phosphate site. R49 is a binding site for beta-D-fructose 1,6-bisphosphate. D-glyceraldehyde 3-phosphate is bound at residue K113. K152 provides a ligand contact to dihydroxyacetone phosphate. E195 contacts D-glyceraldehyde 3-phosphate. E195 functions as the Proton acceptor in the catalytic mechanism. Residues K237, S279, and G280 each contribute to the dihydroxyacetone phosphate site. Catalysis depends on K237, which acts as the Schiff-base intermediate with dihydroxyacetone phosphate. Beta-D-fructose 1,6-bisphosphate is bound by residues 279–281 (SGG) and S307. Dihydroxyacetone phosphate contacts are provided by G309 and R310. R310 contacts beta-D-fructose 1,6-bisphosphate.

The protein belongs to the class I fructose-bisphosphate aldolase family. In terms of assembly, homotetramer. Interacts with TRAP (via cytoplasmic domain); the interaction prevents substrate binding and thereby inhibits aldolase activity. Interacts with MTRAP (via cytoplasmic domain); MTRAP phosphorylation may increase the binding to FBPA. Interact with RH1 (via cytoplasmic domain). Interacts with RH2b (via cytoplasmic domain). Interacts with RH4 (via cytoplasmic domain). Interacts with AMA1 (via cytoplasmic domain); the interaction is weak, however it may be increased upon AMA1 phosphorylation. Interacts with EBA140 (via cytoplasmic domain); the interaction is weak. Interacts with EBA175 (via cytoplasmic domain); the interaction is weak. Interacts with EBA181 (via cytoplasmic domain); the interaction is weak. Interacts with G-actin and F-actin. May interact with ACT2/actin II; the interaction inhibits FBPA catalytic activity. Interacts with human SLC4A1/band 3 (via N-terminus); the interaction inhibits FBPA catalytic activity.

Its subcellular location is the cytoplasm. The protein localises to the membrane. It is found in the host cell membrane. The catalysed reaction is beta-D-fructose 1,6-bisphosphate = D-glyceraldehyde 3-phosphate + dihydroxyacetone phosphate. The protein operates within carbohydrate degradation; glycolysis; D-glyceraldehyde 3-phosphate and glycerone phosphate from D-glucose: step 4/4. With respect to regulation, the cytoplasmic tail of TRAP and probably other adhesins acts as a competitive inhibitor as the binding sites of the glycolytic substrate fructose 1,6-bisphosphate and TRAP partially overlap. In terms of biological role, plays a key role in glycolysis by catalyzing the cleavage of fructose 1,6-bisphosphate into dihydroxyacetone phosphate and glyceraldehyde 3-phosphate. Independently of its catalytic activity, connects the actin filaments, and thus the actomyosin motor, to cell surface adhesins of the thrombospondin-related anonymous protein (TRAP), the erythrocyte binding ligand (EBL) and reticulocyte binding homolog (RH) protein families; this interaction is probably involved in transducing the motor force across the parasite surface required for sporozoite and ookinete gliding motility and merozoite invasion. Stimulates actin polymerisation. The polypeptide is Fructose-bisphosphate aldolase (Plasmodium falciparum (isolate 3D7)).